Reading from the N-terminus, the 239-residue chain is tRNA (guanine-N(7)-)-methyltransferase (239 aa).

The span at 1–13 (MEAEVQQGQQSPE) shows a compositional bias: polar residues. The interval 1–30 (MEAEVQQGQQSPEGQLEKRPPSPPWAGIPL) is disordered. S-adenosyl-L-methionine-binding residues include Asp72, Glu97, Asn124, and Asp147. Asp147 is a catalytic residue. Positions 151 and 183 each coordinate substrate.

The protein belongs to the class I-like SAM-binding methyltransferase superfamily. TrmB family.

It catalyses the reaction guanosine(46) in tRNA + S-adenosyl-L-methionine = N(7)-methylguanosine(46) in tRNA + S-adenosyl-L-homocysteine. It participates in tRNA modification; N(7)-methylguanine-tRNA biosynthesis. In terms of biological role, catalyzes the formation of N(7)-methylguanine at position 46 (m7G46) in tRNA. The sequence is that of tRNA (guanine-N(7)-)-methyltransferase from Synechococcus sp. (strain JA-2-3B'a(2-13)) (Cyanobacteria bacterium Yellowstone B-Prime).